The primary structure comprises 113 residues: Putative pterin-4-alpha-carbinolamine dehydratase (113 aa).

It belongs to the pterin-4-alpha-carbinolamine dehydratase family.

It carries out the reaction (4aS,6R)-4a-hydroxy-L-erythro-5,6,7,8-tetrahydrobiopterin = (6R)-L-erythro-6,7-dihydrobiopterin + H2O. In Nitrosomonas europaea (strain ATCC 19718 / CIP 103999 / KCTC 2705 / NBRC 14298), this protein is Putative pterin-4-alpha-carbinolamine dehydratase.